The following is a 320-amino-acid chain: Cytochrome f (320 aa).

Residues 1–35 (MQNRNTFSWVKEQMTRFISVSIMIYVITRTSIANA) form the signal peptide. 4 residues coordinate heme: Y36, C56, C59, and H60. Residues 286 to 306 (VQGLLFFLASVILAQIFLVLK) form a helical membrane-spanning segment.

This sequence belongs to the cytochrome f family. The 4 large subunits of the cytochrome b6-f complex are cytochrome b6, subunit IV (17 kDa polypeptide, petD), cytochrome f and the Rieske protein, while the 4 small subunits are PetG, PetL, PetM and PetN. The complex functions as a dimer. Heme serves as cofactor.

The protein resides in the plastid. It localises to the chloroplast thylakoid membrane. In terms of biological role, component of the cytochrome b6-f complex, which mediates electron transfer between photosystem II (PSII) and photosystem I (PSI), cyclic electron flow around PSI, and state transitions. In Acorus calamus (Sweet flag), this protein is Cytochrome f.